A 71-amino-acid chain; its full sequence is UPF0346 protein BcerKBAB4_2120 (71 aa).

This sequence belongs to the UPF0346 family.

In Bacillus mycoides (strain KBAB4) (Bacillus weihenstephanensis), this protein is UPF0346 protein BcerKBAB4_2120.